The following is a 346-amino-acid chain: L-threonine dehydratase catabolic TdcB (346 aa).

Residue 59-60 (FT) coordinates AMP. Position 64 is an N6-(pyridoxal phosphate)lysine (Lys-64). Residues Gln-94, 125-126 (GY), and Asn-321 each bind AMP.

The protein belongs to the serine/threonine dehydratase family. In the native structure, TdcB is in a dimeric form, whereas in the TdcB-AMP complex, it exists in a tetrameric form (dimer of dimers). Pyridoxal 5'-phosphate is required as a cofactor.

It catalyses the reaction L-threonine = 2-oxobutanoate + NH4(+). It functions in the pathway amino-acid degradation; L-threonine degradation via propanoate pathway; propanoate from L-threonine: step 1/4. Each protein molecule can bind up to four molecules of AMP, which act as an allosteric activator to the enzyme. In terms of biological role, catalyzes the anaerobic formation of alpha-ketobutyrate and ammonia from threonine in a two-step reaction. The first step involved a dehydration of threonine and a production of enamine intermediates (aminocrotonate), which tautomerizes to its imine form (iminobutyrate). Both intermediates are unstable and short-lived. The second step is the nonenzymatic hydrolysis of the enamine/imine intermediates to form 2-ketobutyrate and free ammonia. In the low water environment of the cell, the second step is accelerated by RidA. The protein is L-threonine dehydratase catabolic TdcB (tdcB) of Staphylococcus aureus (strain bovine RF122 / ET3-1).